The sequence spans 80 residues: Lantibiotic Flvalpha.c (80 aa).

Residues M1–A38 constitute a propeptide, cleaved by FlvT. 2 positions are modified to 2,3-didehydrobutyrine; by FlvM1: T43 and T47. The beta-methyllanthionine (Thr-Cys); by FlvM1 cross-link spans T52–C55. The lanthionine (Ser-Cys); by FlvM1 cross-link spans S58–C68. 2 cross-links (beta-methyllanthionine (Thr-Cys); by FlvM1) span residues T69–C74 and T71–C78.

In terms of processing, the lanthionine formed by Ser-58 and Cys-68 forms a putative lipid II binding motif. Post-translationally, maturation of FlvA1 peptides involves the enzymatic conversion of Thr, and Ser into dehydrated AA and the formation of thioether bonds with cysteines. Modifications are processed by the flavecin synthetase FlvM1. This is followed by membrane translocation and cleavage of the modified precursor. Contains DL-lanthionine and DL-beta-methyllanthionine, when coepressed in E.coli with the flavecin synthetase FlvM1.

The protein resides in the secreted. Its function is as follows. Lanthionine-containing peptide antibiotic (lantibiotic) only active on Gram-positive bacteria in synergy with Flvbeta peptides, which are encoded by the same operon than Flvalpha.a. Shows antibacterial activity in synergy with Flvbeta.b, Flvbeta.c, Flvbeta.e and Flvbeta.g. Does not show antibacterial activity when tested with Flvbeta.a, Flvbeta.d, Flvbeta.f and Flvbeta.h. The bactericidal activity of lantibiotics is based on depolarization of energized bacterial cytoplasmic membranes, initiated by the formation of aqueous transmembrane pores. In Ruminococcus flavefaciens, this protein is Lantibiotic Flvalpha.c.